The sequence spans 25 residues: Fructokinase-1 (25 aa).

Belongs to the ROK (NagC/XylR) family. In terms of assembly, homodimer. Mg(2+) is required as a cofactor.

It carries out the reaction D-fructose + ATP = D-fructose 6-phosphate + ADP + H(+). Inhibition by zinc ions (Potential). Inactivated by EDTA. This Lactococcus lactis subsp. lactis (Streptococcus lactis) protein is Fructokinase-1.